Here is a 354-residue protein sequence, read N- to C-terminus: Methylthioribose-1-phosphate isomerase (354 aa).

The active-site Proton donor is the Asp-246.

It belongs to the eIF-2B alpha/beta/delta subunits family. MtnA subfamily.

It localises to the cytoplasm. It is found in the nucleus. It carries out the reaction 5-(methylsulfanyl)-alpha-D-ribose 1-phosphate = 5-(methylsulfanyl)-D-ribulose 1-phosphate. It functions in the pathway amino-acid biosynthesis; L-methionine biosynthesis via salvage pathway; L-methionine from S-methyl-5-thio-alpha-D-ribose 1-phosphate: step 1/6. Functionally, catalyzes the interconversion of methylthioribose-1-phosphate (MTR-1-P) into methylthioribulose-1-phosphate (MTRu-1-P). The chain is Methylthioribose-1-phosphate isomerase (mri1) from Xenopus laevis (African clawed frog).